Reading from the N-terminus, the 841-residue chain is DNA ligase (841 aa).

NAD(+) contacts are provided by residues 54–58 (DAEYD), 103–104 (SL), and Glu-143. Catalysis depends on Lys-145, which acts as the N6-AMP-lysine intermediate. Residues Arg-166, Glu-203, Lys-321, and Lys-345 each contribute to the NAD(+) site. The Zn(2+) site is built by Cys-471, Cys-474, Cys-489, and Cys-495. The disordered stretch occupies residues 554–575 (KTVAESDQMPSEGSSVGASGKH). Residues 561–570 (QMPSEGSSVG) are compositionally biased toward polar residues. In terms of domain architecture, BRCT spans 764–841 (GINKAVAGKT…SEAELLTLLG (78 aa)).

It belongs to the NAD-dependent DNA ligase family. LigA subfamily. Mg(2+) is required as a cofactor. It depends on Mn(2+) as a cofactor.

It catalyses the reaction NAD(+) + (deoxyribonucleotide)n-3'-hydroxyl + 5'-phospho-(deoxyribonucleotide)m = (deoxyribonucleotide)n+m + AMP + beta-nicotinamide D-nucleotide.. In terms of biological role, DNA ligase that catalyzes the formation of phosphodiester linkages between 5'-phosphoryl and 3'-hydroxyl groups in double-stranded DNA using NAD as a coenzyme and as the energy source for the reaction. It is essential for DNA replication and repair of damaged DNA. This Neisseria meningitidis serogroup C (strain 053442) protein is DNA ligase.